Consider the following 447-residue polypeptide: Oxysterols receptor LXR-alpha (447 aa).

2 disordered regions span residues 1-37 (MSLW…GGSS) and 65-88 (ALLT…KKGP). A transactivation AF-1; required for ligand-independent transactivation function region spans residues 1-96 (MSLWLGAPVP…GPAPKMLGNE (96 aa)). The segment covering 24–37 (GAQDASSQAQGGSS) has biased composition (low complexity). A DNA-binding region (nuclear receptor) is located at residues 95–170 (NELCSVCGDK…AGMREECVLS (76 aa)). 2 NR C4-type zinc fingers span residues 98–118 (CSVC…CEGC) and 134–158 (CHSG…LRKC). Positions 180 to 202 (KRQEEEQAHATSLPPRASSPPQI) are disordered. The interval 205–447 (QLSPEQLGMI…LLSEIWDVHE (243 aa)) is transactivation AF-2; required for ligand-dependent transactivation function; mediates interaction with CCAR2. The NR LBD domain occupies 209 to 447 (EQLGMIEKLV…LLSEIWDVHE (239 aa)).

Belongs to the nuclear hormone receptor family. NR1 subfamily. In terms of assembly, heterodimer of NR1H3 and RXR (retinoic acid receptor). Interacts with CCAR2 (via N-terminus) in a ligand-independent manner. Interacts with SIRT1 and this interaction is inhibited by CCAR2. Interacts with GPS2. In terms of processing, ubiquitinated by UBR5, leading to its degradation: UBR5 specifically recognizes and binds ligand-bound NR1H3 when it is not associated with coactivators (NCOAs). In presence of NCOAs, the UBR5-degron is not accessible, preventing its ubiquitination and degradation. In terms of tissue distribution, visceral organs specific expression. Strong expression was found in liver, kidney and intestine followed by spleen and to a lesser extent the adrenals.

The protein localises to the nucleus. It is found in the cytoplasm. In terms of biological role, nuclear receptor that exhibits a ligand-dependent transcriptional activation activity. Interaction with retinoic acid receptor (RXR) shifts RXR from its role as a silent DNA-binding partner to an active ligand-binding subunit in mediating retinoid responses through target genes defined by LXRES. LXRES are DR4-type response elements characterized by direct repeats of two similar hexanuclotide half-sites spaced by four nucleotides. Plays an important role in the regulation of cholesterol homeostasis, regulating cholesterol uptake through MYLIP-dependent ubiquitination of LDLR, VLDLR and LRP8. Interplays functionally with RORA for the regulation of genes involved in liver metabolism. Induces LPCAT3-dependent phospholipid remodeling in endoplasmic reticulum (ER) membranes of hepatocytes, driving SREBF1 processing and lipogenesis. Via LPCAT3, triggers the incorporation of arachidonate into phosphatidylcholines of ER membranes, increasing membrane dynamics and enabling triacylglycerols transfer to nascent very low-density lipoprotein (VLDL) particles. Via LPCAT3 also counteracts lipid-induced ER stress response and inflammation, likely by modulating SRC kinase membrane compartmentalization and limiting the synthesis of lipid inflammatory mediators. In Homo sapiens (Human), this protein is Oxysterols receptor LXR-alpha (NR1H3).